Reading from the N-terminus, the 269-residue chain is 3-methyl-2-oxobutanoate hydroxymethyltransferase (269 aa).

Positions 50 and 89 each coordinate Mg(2+). 3-methyl-2-oxobutanoate-binding positions include 50–51 (DS), Asp-89, and Lys-119. Glu-121 provides a ligand contact to Mg(2+). The Proton acceptor role is filled by Glu-187.

This sequence belongs to the PanB family. Homodecamer; pentamer of dimers. The cofactor is Mg(2+).

It is found in the cytoplasm. The catalysed reaction is 3-methyl-2-oxobutanoate + (6R)-5,10-methylene-5,6,7,8-tetrahydrofolate + H2O = 2-dehydropantoate + (6S)-5,6,7,8-tetrahydrofolate. It functions in the pathway cofactor biosynthesis; (R)-pantothenate biosynthesis; (R)-pantoate from 3-methyl-2-oxobutanoate: step 1/2. Catalyzes the reversible reaction in which hydroxymethyl group from 5,10-methylenetetrahydrofolate is transferred onto alpha-ketoisovalerate to form ketopantoate. In Corynebacterium efficiens (strain DSM 44549 / YS-314 / AJ 12310 / JCM 11189 / NBRC 100395), this protein is 3-methyl-2-oxobutanoate hydroxymethyltransferase.